A 143-amino-acid chain; its full sequence is Transcriptional regulator MraZ (143 aa).

SpoVT-AbrB domains are found at residues 5 to 47 (THSP…SQKE) and 76 to 119 (ASDE…DADA).

It belongs to the MraZ family. Forms oligomers.

The protein localises to the cytoplasm. Its subcellular location is the nucleoid. The protein is Transcriptional regulator MraZ of Paenarthrobacter aurescens (strain TC1).